A 180-amino-acid polypeptide reads, in one-letter code: ATP synthase subunit delta (180 aa).

The protein belongs to the ATPase delta chain family. F-type ATPases have 2 components, F(1) - the catalytic core - and F(0) - the membrane proton channel. F(1) has five subunits: alpha(3), beta(3), gamma(1), delta(1), epsilon(1). F(0) has three main subunits: a(1), b(2) and c(10-14). The alpha and beta chains form an alternating ring which encloses part of the gamma chain. F(1) is attached to F(0) by a central stalk formed by the gamma and epsilon chains, while a peripheral stalk is formed by the delta and b chains.

Its subcellular location is the cell membrane. F(1)F(0) ATP synthase produces ATP from ADP in the presence of a proton or sodium gradient. F-type ATPases consist of two structural domains, F(1) containing the extramembraneous catalytic core and F(0) containing the membrane proton channel, linked together by a central stalk and a peripheral stalk. During catalysis, ATP synthesis in the catalytic domain of F(1) is coupled via a rotary mechanism of the central stalk subunits to proton translocation. In terms of biological role, this protein is part of the stalk that links CF(0) to CF(1). It either transmits conformational changes from CF(0) to CF(1) or is implicated in proton conduction. The protein is ATP synthase subunit delta of Bacillus cereus (strain G9842).